Consider the following 104-residue polypeptide: ATP-dependent Clp protease adapter protein ClpS (104 aa).

This sequence belongs to the ClpS family. In terms of assembly, binds to the N-terminal domain of the chaperone ClpA.

In terms of biological role, involved in the modulation of the specificity of the ClpAP-mediated ATP-dependent protein degradation. The chain is ATP-dependent Clp protease adapter protein ClpS from Burkholderia thailandensis (strain ATCC 700388 / DSM 13276 / CCUG 48851 / CIP 106301 / E264).